Consider the following 216-residue polypeptide: Probable GTP-binding protein EngB (216 aa).

In terms of domain architecture, EngB-type G spans 30–204 (DGLEVAFAGR…HDVLARWLGL (175 aa)). Residues 38–45 (GRSNAGKS), 64–68 (GRTQL), 82–85 (DLPG), 149–152 (TKAD), and 182–185 (LFSA) each bind GTP. Residues Ser45 and Thr66 each coordinate Mg(2+).

Belongs to the TRAFAC class TrmE-Era-EngA-EngB-Septin-like GTPase superfamily. EngB GTPase family. Requires Mg(2+) as cofactor.

Its function is as follows. Necessary for normal cell division and for the maintenance of normal septation. The protein is Probable GTP-binding protein EngB of Azotobacter vinelandii (strain DJ / ATCC BAA-1303).